A 373-amino-acid polypeptide reads, in one-letter code: MWVCSTLWRVRTPARQWRGLLPASGCHGPAASSYSASAEPARVRALVYGHHGDPAKVVELKNLELAAVRGSDVRVKMLAAPINPSDINMIQGNYGFLPELPAVGGNEGVAQVVAVGSNVTGLKPGDWVIPANAGLGTWRTEAVFSEEALIQVPSDIPLQSAATLGVNPCTAYRMLMDFEQLQPGDSVIQNASNSGVGQAVIQIAAALGLRTINVVRDRPDIQKLSDRLKSLGAEHVITEEELRRPEMKNFFKDMPQPRLALNCVGGKSSTELLRQLARGGTMVTYGGMAKQPVVASVSLLIFKDLKLRGFWLSQWKKDHSPDQFKELILTLCDLIRRGQLTAPACSQVPLQDYQSALEASMKPFISSKQILTM.

The N-terminal 53 residues, 1–53 (MWVCSTLWRVRTPARQWRGLLPASGCHGPAASSYSASAEPARVRALVYGHHGD), are a transit peptide targeting the mitochondrion. Lysine 61 bears the N6-acetyllysine; alternate mark. The residue at position 61 (lysine 61) is an N6-succinyllysine; alternate. Residue tyrosine 94 is the Proton donor of the active site. NADP(+)-binding positions include asparagine 167, 193–196 (NSGV), and 216–218 (RDR). N6-acetyllysine; alternate is present on residues lysine 252 and lysine 267. Residues lysine 252 and lysine 267 each carry the N6-succinyllysine; alternate modification. Residues 285-288 (YGGM) and 310-312 (FWL) each bind NADP(+). The residue at position 316 (lysine 316) is an N6-succinyllysine. Lysine 368 lines the NADP(+) pocket.

The protein belongs to the zinc-containing alcohol dehydrogenase family. Quinone oxidoreductase subfamily. In terms of assembly, homodimer. Isoform 2 interacts with PPARA in the nucleus and increases its activity. In terms of tissue distribution, highly expressed in skeletal and heart muscle. Expressed at lower level in placenta, liver, kidney and pancreas. Weakly or not expressed in lung.

The protein resides in the mitochondrion. It is found in the cytoplasm. The protein localises to the nucleus. The catalysed reaction is a 2,3-saturated acyl-[ACP] + NADP(+) = a (2E)-enoyl-[ACP] + NADPH + H(+). It catalyses the reaction (2E)-butenoyl-[ACP] + NADPH + H(+) = butanoyl-[ACP] + NADP(+). The enzyme catalyses (2E)-hexenoyl-[ACP] + NADPH + H(+) = hexanoyl-[ACP] + NADP(+). It carries out the reaction (2E)-octenoyl-[ACP] + NADPH + H(+) = octanoyl-[ACP] + NADP(+). The catalysed reaction is (2E)-decenoyl-[ACP] + NADPH + H(+) = decanoyl-[ACP] + NADP(+). It catalyses the reaction (2E)-dodecenoyl-[ACP] + NADPH + H(+) = dodecanoyl-[ACP] + NADP(+). The enzyme catalyses (2E)-tetradecenoyl-[ACP] + NADPH + H(+) = tetradecanoyl-[ACP] + NADP(+). It carries out the reaction (2E)-hexadecenoyl-[ACP] + NADPH + H(+) = hexadecanoyl-[ACP] + NADP(+). In terms of biological role, catalyzes the NADPH-dependent reduction of trans-2-enoyl thioesters in mitochondrial fatty acid synthesis (fatty acid synthesis type II). Fatty acid chain elongation in mitochondria uses acyl carrier protein (ACP) as an acyl group carrier, but the enzyme accepts both ACP and CoA thioesters as substrates in vitro. Displays a preference for medium-chain over short- and long-chain substrates. May provide the octanoyl chain used for lipoic acid biosynthesis, regulating protein lipoylation and mitochondrial respiratory activity particularly in Purkinje cells. Involved in iron homeostasis; affecting Fe-S cluster assembly and ceramide metabolism. Required for proper morphology and bioenergetic functions of mitochondria. Required for maintenance of neurons. This Homo sapiens (Human) protein is Enoyl-[acyl-carrier-protein] reductase, mitochondrial (MECR).